The sequence spans 334 residues: Ornithine carbamoyltransferase (334 aa).

Carbamoyl phosphate contacts are provided by residues 57-60, Gln-84, Arg-108, and 135-138; these read STRT and HPTQ. L-ornithine contacts are provided by residues Asn-169, Asp-233, and 237–238; that span reads SM. Residues 275–276 and Arg-320 each bind carbamoyl phosphate; that span reads CL.

This sequence belongs to the aspartate/ornithine carbamoyltransferase superfamily. OTCase family.

The protein localises to the cytoplasm. It carries out the reaction carbamoyl phosphate + L-ornithine = L-citrulline + phosphate + H(+). The protein operates within amino-acid biosynthesis; L-arginine biosynthesis; L-arginine from L-ornithine and carbamoyl phosphate: step 1/3. In terms of biological role, reversibly catalyzes the transfer of the carbamoyl group from carbamoyl phosphate (CP) to the N(epsilon) atom of ornithine (ORN) to produce L-citrulline. The polypeptide is Ornithine carbamoyltransferase (Vibrio parahaemolyticus serotype O3:K6 (strain RIMD 2210633)).